Reading from the N-terminus, the 158-residue chain is Small ribosomal subunit protein uS9 (158 aa).

It belongs to the universal ribosomal protein uS9 family.

The polypeptide is Small ribosomal subunit protein uS9 (Nitrobacter hamburgensis (strain DSM 10229 / NCIMB 13809 / X14)).